The following is a 328-amino-acid chain: Malate dehydrogenase (328 aa).

NAD(+) is bound at residue G11–G17. Residues R94 and R100 each contribute to the substrate site. NAD(+) is bound by residues N107, Q114, and V131–N133. Residues N133 and R164 each coordinate substrate. H189 serves as the catalytic Proton acceptor.

It belongs to the LDH/MDH superfamily. MDH type 2 family.

The catalysed reaction is (S)-malate + NAD(+) = oxaloacetate + NADH + H(+). Functionally, catalyzes the reversible oxidation of malate to oxaloacetate. The chain is Malate dehydrogenase from Xanthomonas oryzae pv. oryzae (strain MAFF 311018).